The primary structure comprises 301 residues: MVRTDRDRWDLATSVGATATMVAAQRALAADPQYALIDDPYAAPLVRAVGIDVYTRLVNGQIPVDVESGFDPARMAEAMACRTRFYDQFFVEATRSGISQVVILASGLDARAYRLDWPAGTVVYEVDMPEVIEFKTLTLADLGAEPTAERRTVAVDLRDDWAAALQAAGFDKDVPSAWSAEGLLVYLPDDAQDALFDNITALSATGSRLAFEFVPDTAVFNDERWRSHHARMSELGFEIDFNDLVYHGQRSHVIDHLARDGWQSASHTAKELHAANGFDYPDDDIAAVFADITYTSAVLGR.

S-adenosyl-L-methionine is bound by residues Asp-127 and 156–157 (DL).

Belongs to the UPF0677 family.

Exhibits S-adenosyl-L-methionine-dependent methyltransferase activity. In Mycobacterium marinum (strain ATCC BAA-535 / M), this protein is Putative S-adenosyl-L-methionine-dependent methyltransferase MMAR_4850.